The primary structure comprises 339 residues: MNNDKNGSSGGLALIGDIGGTNARFALWRGQRLESIAVLACADYPRPELAVRDYLARVGESLANIDSVCLACAGPVGAGDFRFTNNHWSINRAAFREELGLDHLLLVNDFSTMAWAASRLGADELVQVRPGSAQADRARLIIGPGTGLGVGSLLPLGEGRWEVLPCEGGHVDLPVTSARDFAVWESLRERYGHVSAERVLSGNGLLALYEISCALDGIPVRATSAAEVGALALAGDAQADAVLEHFFLWLARVAGNAALTVGALGGVYITGGIVPRFRERFLASGFAGAFASRGKTSGAYLQDVPVWIMTAEHPGLLGAGVALQQALDAESRTGVRATA.

16–21 (GDIGGT) is an ATP binding site.

It belongs to the bacterial glucokinase family.

Its subcellular location is the cytoplasm. It catalyses the reaction D-glucose + ATP = D-glucose 6-phosphate + ADP + H(+). The polypeptide is Glucokinase (Pseudomonas paraeruginosa (strain DSM 24068 / PA7) (Pseudomonas aeruginosa (strain PA7))).